Here is a 229-residue protein sequence, read N- to C-terminus: LIGIQAEPHTESNVPAGHAIPQAHWTKLQHSLDTALRRAHSAPAGANSARVAGQTRNITVDPKLFKKRRLRSPRVLFSTQPPPVAADTQDPDLEASGAASFNRTHRSKRSSSHPVFHRGEFSVCDSVSVWVGDKTTATDIKGKEVMVLGEVNINNSVFKQYFFETKCRDPNPVDSGCRGIDSKHWNSYCTTTHTFVKALTMDGKQAAWRFIRIDTACVCVLSRKAGRRA.

An N-terminal signal peptide occupies residues 1–6 (LIGIQA). The propeptide occupies 7 to 109 (EPHTESNVPA…SFNRTHRSKR (103 aa)). N-linked (GlcNAc...) asparagine glycans are attached at residues N57, N102, and N154. The interval 77–112 (FSTQPPPVAADTQDPDLEASGAASFNRTHRSKRSSS) is disordered. 3 disulfide bridges follow: C124-C189, C167-C217, and C177-C219. A 1-acyl-sn-glycero-3-phospho-(1D-myo-inositol)-binding residues include Y161 and K197. A 1-acyl-sn-glycero-3-phospho-L-serine is bound at residue K197.

The protein belongs to the NGF-beta family. Homodimer. The homodimer interacts with a single NTRK1 chain. The homodimer interacts with a single NGFR chain. The NGF dimer interacts with a single SORCS2 chain (via extracellular domain). The NGF precursor (proNGF) binds to a receptor complex formed by SORT1 and NGFR, which leads to NGF endocytosis. Both mature NGF and the immature NGF precursor (proNGF) interact with SORCS2 and with the heterodimer formed by SORCS2 and NGFR (via extracellular domains). The NGF precursor (proNGF) has much higher affinity for SORCS2 than mature NGF. The NGF precursor (proNGF) has much higher affinity for SORT1 than mature NGF. Interacts with ADAM10 in a divalent cation-dependent manner. Interacts with SORCS3.

It is found in the secreted. The protein resides in the endosome lumen. Nerve growth factor is important for the development and maintenance of the sympathetic and sensory nervous systems. Extracellular ligand for the NTRK1 and NGFR receptors, activates cellular signaling cascades to regulate neuronal proliferation, differentiation and survival. The immature NGF precursor (proNGF) functions as a ligand for the heterodimeric receptor formed by SORCS2 and NGFR, and activates cellular signaling cascades that lead to inactivation of RAC1 and/or RAC2, reorganization of the actin cytoskeleton and neuronal growth cone collapse. In contrast to mature NGF, the precursor form (proNGF) promotes neuronal apoptosis (in vitro). Inhibits metalloproteinase-dependent proteolysis of platelet glycoprotein VI. Binds lysophosphatidylinositol and lysophosphatidylserine between the two chains of the homodimer. The lipid-bound form promotes histamine relase from mast cells, contrary to the lipid-free form. This chain is Beta-nerve growth factor (NGF), found in Sus scrofa (Pig).